A 139-amino-acid chain; its full sequence is Large-conductance mechanosensitive channel 1 (139 aa).

3 consecutive transmembrane segments (helical) span residues 8-28, 30-50, and 81-101; these read FISKGNVMDLAVGVIIGAAFG, IVDSLVNDIIMPIIGAIFGGL, and GSFITVALNFVILAFIIFLMV.

It belongs to the MscL family. Homopentamer.

Its subcellular location is the cell inner membrane. Functionally, channel that opens in response to stretch forces in the membrane lipid bilayer. May participate in the regulation of osmotic pressure changes within the cell. This chain is Large-conductance mechanosensitive channel 1, found in Mesorhizobium japonicum (strain LMG 29417 / CECT 9101 / MAFF 303099) (Mesorhizobium loti (strain MAFF 303099)).